A 70-amino-acid polypeptide reads, in one-letter code: Cold shock-like protein CspA (70 aa).

The 61-residue stretch at glycine 7–leucine 67 folds into the CSD domain.

It is found in the cytoplasm. The polypeptide is Cold shock-like protein CspA (cspA) (Rickettsia bellii (strain RML369-C)).